The primary structure comprises 64 residues: Large ribosomal subunit protein bL28 (64 aa).

The protein belongs to the bacterial ribosomal protein bL28 family.

This chain is Large ribosomal subunit protein bL28, found in Bifidobacterium adolescentis (strain ATCC 15703 / DSM 20083 / NCTC 11814 / E194a).